Here is a 275-residue protein sequence, read N- to C-terminus: Polyamine aminopropyltransferase 1 (275 aa).

Residues 2-235 form the PABS domain; that stretch reads ELWFTEKQTK…GLWTFTIGSK (234 aa). S-methyl-5'-thioadenosine is bound at residue Gln-31. Residues His-62 and Asp-86 each contribute to the spermidine site. S-methyl-5'-thioadenosine is bound by residues Glu-106 and 137 to 138; that span reads DG. Catalysis depends on Asp-155, which acts as the Proton acceptor. 155-158 contributes to the spermidine binding site; the sequence is DSTE. S-methyl-5'-thioadenosine is bound at residue Pro-162.

The protein belongs to the spermidine/spermine synthase family. In terms of assembly, homodimer or homotetramer.

The protein localises to the cytoplasm. It carries out the reaction S-adenosyl 3-(methylsulfanyl)propylamine + putrescine = S-methyl-5'-thioadenosine + spermidine + H(+). It participates in amine and polyamine biosynthesis; spermidine biosynthesis; spermidine from putrescine: step 1/1. In terms of biological role, catalyzes the irreversible transfer of a propylamine group from the amino donor S-adenosylmethioninamine (decarboxy-AdoMet) to putrescine (1,4-diaminobutane) to yield spermidine. This Bacillus cereus (strain ATCC 14579 / DSM 31 / CCUG 7414 / JCM 2152 / NBRC 15305 / NCIMB 9373 / NCTC 2599 / NRRL B-3711) protein is Polyamine aminopropyltransferase 1.